Reading from the N-terminus, the 716-residue chain is DNA ligase (716 aa).

NAD(+) is bound by residues 50 to 54, 99 to 100, and E132; these read DAEYD and SL. The active-site N6-AMP-lysine intermediate is K134. Residues R155, E192, K308, and K332 each contribute to the NAD(+) site. Zn(2+)-binding residues include C437, C439, C461, and C467. The BRCT domain maps to 638 to 716; it reads KSNSAVAGKT…EDEWLKLIGE (79 aa).

Belongs to the NAD-dependent DNA ligase family. LigA subfamily. The cofactor is Mg(2+). Mn(2+) serves as cofactor.

The catalysed reaction is NAD(+) + (deoxyribonucleotide)n-3'-hydroxyl + 5'-phospho-(deoxyribonucleotide)m = (deoxyribonucleotide)n+m + AMP + beta-nicotinamide D-nucleotide.. Its function is as follows. DNA ligase that catalyzes the formation of phosphodiester linkages between 5'-phosphoryl and 3'-hydroxyl groups in double-stranded DNA using NAD as a coenzyme and as the energy source for the reaction. It is essential for DNA replication and repair of damaged DNA. The protein is DNA ligase of Bradyrhizobium diazoefficiens (strain JCM 10833 / BCRC 13528 / IAM 13628 / NBRC 14792 / USDA 110).